Here is a 255-residue protein sequence, read N- to C-terminus: Protein NEN4 (255 aa).

The Exonuclease domain maps to 11–174 (VFFDLETNVP…DDVRMNLEVL (164 aa)). Mg(2+) is bound by residues Asp-14 and Glu-16. The Proton donor/acceptor role is filled by His-161. Residue Asp-166 participates in Mg(2+) binding.

Requires Mg(2+) as cofactor. As to expression, expressed in the sieve elements and phloem pole pericycle cells.

It is found in the nucleus. Its function is as follows. Probable exonuclease required for enuclation of sieve elements. This Arabidopsis thaliana (Mouse-ear cress) protein is Protein NEN4.